We begin with the raw amino-acid sequence, 622 residues long: Mitochondrial distribution and morphology protein 34 (622 aa).

The SMP-LTD domain maps to 1–195 (MAFNFNWSPL…LPAIIHRLSL (195 aa)). 6 disordered regions span residues 211-234 (QVTN…DPVD), 303-322 (PSGL…SHVA), 355-432 (SMGA…IRQP), 445-464 (ERNA…PASR), 482-546 (SLQQ…QTHL), and 581-622 (KMGG…AYRH). Positions 214-225 (NPPLEGPGLDPL) are enriched in low complexity. A compositionally biased stretch (basic residues) spans 360–372 (RHSKAHARKRKKR). The span at 373–384 (VVDLRRRPKNTD) shows a compositional bias: basic and acidic residues. Low complexity predominate over residues 388 to 404 (SVSGESEFTESTSAASV). Composition is skewed to polar residues over residues 482-495 (SLQQ…SKSL) and 522-532 (NASNYTSSGDS). 2 stretches are compositionally biased toward low complexity: residues 533-543 (QQQQQQQQQHQ) and 592-601 (NNKNDNKNNN).

The protein belongs to the MDM34 family. As to quaternary structure, component of the ER-mitochondria encounter structure (ERMES) or MDM complex, composed of MMM1, MDM10, MDM12 and MDM34.

It is found in the mitochondrion outer membrane. Component of the ERMES/MDM complex, which serves as a molecular tether to connect the endoplasmic reticulum (ER) and mitochondria. Components of this complex are involved in the control of mitochondrial shape and protein biogenesis, and function in nonvesicular lipid trafficking between the ER and mitochondria. MDM34 is required for the interaction of the ER-resident membrane protein MMM1 and the outer mitochondrial membrane-resident beta-barrel protein MDM10. This is Mitochondrial distribution and morphology protein 34 from Ajellomyces capsulatus (strain G186AR / H82 / ATCC MYA-2454 / RMSCC 2432) (Darling's disease fungus).